The following is a 129-amino-acid chain: Chorion class A protein L11 (129 aa).

An N-terminal signal peptide occupies residues 1–21 (MSTFAFLLLCVQACLIQNVYG). The tract at residues 22–64 (QCLGRGLGGCGCGGGLGGYGLGYGLGGYGGGYGYGGYGGGYYG) is left arm. The segment at 65–112 (GYGGEGVGNVGVAGVLPVGGVTAVGGRVPIIGGVEFGGPACAGGCVSI) is central domain. Residues 113 to 129 (CGHCAPTCGCGYGGLYY) form a right arm region.

It belongs to the chorion protein family.

Functionally, this protein is one of many from the eggshell of the silk moth. The protein is Chorion class A protein L11 of Bombyx mori (Silk moth).